A 261-amino-acid polypeptide reads, in one-letter code: Malonyl-[acyl-carrier protein] O-methyltransferase (261 aa).

Belongs to the methyltransferase superfamily.

It carries out the reaction malonyl-[ACP] + S-adenosyl-L-methionine = malonyl-[ACP] methyl ester + S-adenosyl-L-homocysteine. The protein operates within cofactor biosynthesis; biotin biosynthesis. In terms of biological role, converts the free carboxyl group of a malonyl-thioester to its methyl ester by transfer of a methyl group from S-adenosyl-L-methionine (SAM). It allows to synthesize pimeloyl-ACP via the fatty acid synthetic pathway. The chain is Malonyl-[acyl-carrier protein] O-methyltransferase from Bacteroides thetaiotaomicron (strain ATCC 29148 / DSM 2079 / JCM 5827 / CCUG 10774 / NCTC 10582 / VPI-5482 / E50).